Consider the following 242-residue polypeptide: MANPDTIFSAPIDKIGDFTFDERVAEVFPDMIQRSIPGYSNIISAIGMLAERYAKPHSSVYDLGCSLGAATLSMRRHINQEGCQIIGVDNSSAMVERCRLLINAYRSDTPVTIVEADIRDVNIQDASVVVLNFTLQFLVPADRRALLEKIYSGLRPGGILILSEKYIFEDGVVNELLIDLHHDFKRANGYSELEISQKRSAIENVMLPDPIDVHKQRFQEIGFKSSEVWFQCFNFGSMFAIK.

S-adenosyl-L-methionine-binding positions include Y39, 64-66 (GCS), 89-90 (DN), 117-118 (DI), N132, and R199.

Belongs to the class I-like SAM-binding methyltransferase superfamily. Cx-SAM synthase family. In terms of assembly, homodimer.

The catalysed reaction is prephenate + S-adenosyl-L-methionine = carboxy-S-adenosyl-L-methionine + 3-phenylpyruvate + H2O. In terms of biological role, catalyzes the conversion of S-adenosyl-L-methionine (SAM) to carboxy-S-adenosyl-L-methionine (Cx-SAM). This chain is Carboxy-S-adenosyl-L-methionine synthase, found in Aliivibrio salmonicida (strain LFI1238) (Vibrio salmonicida (strain LFI1238)).